We begin with the raw amino-acid sequence, 172 residues long: Transcriptional repressor NrdR (172 aa).

Residues 3-34 fold into a zinc finger; that stretch reads CPFCGAPDTRVIDSRLAGEGDQVRRRRECLSC. The ATP-cone domain maps to 49–139; sequence PRVVKRDGSR…VYLSFADVQA (91 aa).

It belongs to the NrdR family. Zn(2+) is required as a cofactor.

In terms of biological role, negatively regulates transcription of bacterial ribonucleotide reductase nrd genes and operons by binding to NrdR-boxes. The sequence is that of Transcriptional repressor NrdR from Thioalkalivibrio sulfidiphilus (strain HL-EbGR7).